A 70-amino-acid polypeptide reads, in one-letter code: UPF0352 protein PBPRA2586 (70 aa).

Belongs to the UPF0352 family.

The polypeptide is UPF0352 protein PBPRA2586 (Photobacterium profundum (strain SS9)).